The primary structure comprises 596 residues: Phosphomethylpyrimidine synthase 1 (596 aa).

Substrate-binding positions include N228, M257, Y286, H322, S342 to G344, D383 to R386, and E422. H426 contributes to the Zn(2+) binding site. Position 449 (Y449) interacts with substrate. H490 contacts Zn(2+). [4Fe-4S] cluster contacts are provided by C570, C573, and C578.

The protein belongs to the ThiC family. As to quaternary structure, homodimer. [4Fe-4S] cluster serves as cofactor.

It catalyses the reaction 5-amino-1-(5-phospho-beta-D-ribosyl)imidazole + S-adenosyl-L-methionine = 4-amino-2-methyl-5-(phosphooxymethyl)pyrimidine + CO + 5'-deoxyadenosine + formate + L-methionine + 3 H(+). It functions in the pathway cofactor biosynthesis; thiamine diphosphate biosynthesis. In terms of biological role, catalyzes the synthesis of the hydroxymethylpyrimidine phosphate (HMP-P) moiety of thiamine from aminoimidazole ribotide (AIR) in a radical S-adenosyl-L-methionine (SAM)-dependent reaction. The sequence is that of Phosphomethylpyrimidine synthase 1 from Syntrophotalea carbinolica (strain DSM 2380 / NBRC 103641 / GraBd1) (Pelobacter carbinolicus).